The sequence spans 465 residues: Mothers against decapentaplegic homolog 5 (465 aa).

The MH1 domain occupies 13–137 (PAVKRLLGWK…YKRVESPVLP (125 aa)). Positions 65, 110, 122, and 127 each coordinate Zn(2+). Positions 163-242 (NEPHMPHNAT…MGQDNSQSMD (80 aa)) are disordered. Over residues 173–183 (FPDSFQQPNST) the composition is skewed to polar residues. A compositionally biased stretch (low complexity) spans 198-214 (ASSTYPSSPASSGPSSP). The MH2 domain maps to 271-465 (WCSIVYYELN…SPLNPISSVS (195 aa)).

It belongs to the dwarfin/SMAD family. In terms of assembly, may form trimers with the co-SMAD SMAD4.

Its subcellular location is the cytoplasm. The protein resides in the nucleus. Its function is as follows. Transcriptional modulator activated by BMP (bone morphogenetic proteins) type 1 receptor kinase. SMAD5 is a receptor-regulated SMAD (R-SMAD). This is Mothers against decapentaplegic homolog 5 (SMAD5) from Gallus gallus (Chicken).